We begin with the raw amino-acid sequence, 760 residues long: Transferrin receptor protein 1 (760 aa).

Topologically, residues 1–67 are cytoplasmic; the sequence is MMDQARSAFS…KPKRCSGSIC (67 aa). Residues 1–67 are mediates interaction with SH3BP4; it reads MMDQARSAFS…KPKRCSGSIC (67 aa). 2 positions are modified to phosphoserine: Ser-10 and Ser-19. Tyr-20 is subject to Phosphotyrosine. An Endocytosis signal motif is present at residues 20-23; that stretch reads YTRF. Thr-21 carries the phosphothreonine modification. Ser-24 bears the Phosphoserine mark. Positions 58 to 61 match the Stop-transfer sequence motif; that stretch reads KPKR. 2 S-palmitoyl cysteine lipidation sites follow: Cys-62 and Cys-67. A helical; Signal-anchor for type II membrane protein transmembrane segment spans residues 68-88; that stretch reads YGTIAVIVFFLIGFMIGYLGY. Topologically, residues 89 to 760 are extracellular; sequence CKGVEPKTEC…GDVWDIDNEF (672 aa). The O-linked (GalNAc...) threonine glycan is linked to Thr-104. The PA domain maps to 223–313; that stretch reads SKAATVTGKL…GTGDPYTPGF (91 aa). 2 N-linked (GlcNAc...) asparagine glycosylation sites follow: Asn-251 and Asn-317. A ligand-binding region spans residues 569–760; the sequence is TMDTYKELIE…GDVWDIDNEF (192 aa). The Cell attachment site; required for binding to transferrin signature appears at 646 to 648; the sequence is RGD. Residue Asn-727 is glycosylated (N-linked (GlcNAc...) asparagine).

The protein belongs to the peptidase M28 family. M28B subfamily. In terms of assembly, homodimer; disulfide-linked. Binds one transferrin or HFE molecule per subunit. Binds the HLA class II histocompatibility antigen, DR1. Interacts with SH3BP3. Interacts with STEAP3; facilitates TFRC endocytosis in erythroid precursor cells. Interacts with GRM2. As to quaternary structure, (Microbial infection) Interacts with Guanarito, Junin and Machupo arenavirus glycoprotein complex. (Microbial infection) Interacts with rabies virus protein G. In terms of assembly, (Microbial infection) Interacts with SARS-CoV-2 spike protein S. Stearoylated by ZDHHC6 which inhibits TFRC-mediated activation of the JNK pathway and promotes mitochondrial fragmentation. Stearoylation does not affect iron uptake. Post-translationally, N- and O-glycosylated, phosphorylated and palmitoylated. The serum form is only glycosylated. In terms of processing, proteolytically cleaved on Arg-100 to produce the soluble serum form (sTfR). Palmitoylated on both Cys-62 and Cys-67. Cys-62 seems to be the major site of palmitoylation.

Its subcellular location is the cell membrane. The protein localises to the melanosome. The protein resides in the secreted. In terms of biological role, cellular uptake of iron occurs via receptor-mediated endocytosis of ligand-occupied transferrin receptor into specialized endosomes. Endosomal acidification leads to iron release. The apotransferrin-receptor complex is then recycled to the cell surface with a return to neutral pH and the concomitant loss of affinity of apotransferrin for its receptor. Transferrin receptor is necessary for development of erythrocytes and the nervous system. A second ligand, the hereditary hemochromatosis protein HFE, competes for binding with transferrin for an overlapping C-terminal binding site. Positively regulates T and B cell proliferation through iron uptake. Acts as a lipid sensor that regulates mitochondrial fusion by regulating activation of the JNK pathway. When dietary levels of stearate (C18:0) are low, promotes activation of the JNK pathway, resulting in HUWE1-mediated ubiquitination and subsequent degradation of the mitofusin MFN2 and inhibition of mitochondrial fusion. When dietary levels of stearate (C18:0) are high, TFRC stearoylation inhibits activation of the JNK pathway and thus degradation of the mitofusin MFN2. Mediates uptake of NICOL1 into fibroblasts where it may regulate extracellular matrix production. Its function is as follows. (Microbial infection) Acts as a receptor for new-world arenaviruses: Guanarito, Junin and Machupo virus. Functionally, (Microbial infection) Acts as a host entry factor for rabies virus that hijacks the endocytosis of TFRC to enter cells. (Microbial infection) Acts as a host entry factor for SARS-CoV, MERS-CoV and SARS-CoV-2 viruses that hijack the endocytosis of TFRC to enter cells. This is Transferrin receptor protein 1 (TFRC) from Homo sapiens (Human).